We begin with the raw amino-acid sequence, 1021 residues long: Probable calcium-transporting ATPase 6, plasma membrane-type (1021 aa).

Topologically, residues M1–A155 are cytoplasmic. The next 2 membrane-spanning stretches (helical) occupy residues L156–L176 and W181–V201. Topologically, residues T202–L241 are cytoplasmic. 2 consecutive transmembrane segments (helical) span residues V242–I262 and V338–L358. Over A359–N384 the chain is Cytoplasmic. Residues Y385 to V405 traverse the membrane as a helical segment. D441 acts as the 4-aspartylphosphate intermediate in catalysis. 2 residues coordinate Mg(2+): D740 and D744. Residues I807 to A827 traverse the membrane as a helical segment. Over V828–Q829 the chain is Cytoplasmic. 2 helical membrane passes run L830 to P850 and G879 to I899. Over E900 to N942 the chain is Cytoplasmic. 2 helical membrane-spanning segments follow: residues W943–L963 and G974–L994. The Cytoplasmic segment spans residues K995–L1021.

The protein belongs to the cation transport ATPase (P-type) (TC 3.A.3) family. Type IIB subfamily.

The protein localises to the membrane. The enzyme catalyses Ca(2+)(in) + ATP + H2O = Ca(2+)(out) + ADP + phosphate + H(+). With respect to regulation, activated by calmodulin. Its function is as follows. This magnesium-dependent enzyme catalyzes the hydrolysis of ATP coupled with the translocation of calcium from the cytosol out of the cell, into the endoplasmic reticulum, or into organelles. The polypeptide is Probable calcium-transporting ATPase 6, plasma membrane-type (Oryza sativa subsp. japonica (Rice)).